The chain runs to 692 residues: MGVSWPAKVRRRDGTLVPFDIARIEAAVTRAAREVACDDPDMPGTVAKAVADALGRGIAPVEDIQDCVEARLGEAGLDDVARVYIIYRQRRAELRTAKALLGVRDELKLSLAAVTVLRERYLLHDEQGRPAESTGELMDRSARCVAAAEDQYEPGSSRRWAERFATLLRNLEFLPNSPTLMNSGTDLGLLAGCFVLPIEDSLQSIFATLGQAAELQRAGGGTGYAFSHLRPAGDRVASTGGTASGPVSFLRLYDSAAGVVSMGGRRRGACMAVLDVSHPDICDFVTAKAESPSELPHFNLSVGVTDAFLRAVERNGLHRLVNPRTGKIVARMPAAELFDAICKAAHAGGDPGLVFLDTINRANPVPGRGRIEATNPCGEVPLLPYESCNLGSINLARMLADGRVDWDRLEEVAGVAVRFLDDVIDVSRYPFPELGEAARATRKIGLGVMGLAELLAALGIPYDSEEAVRLATRLMRRIQQAAHTASRRLAEERGAFPAFTDSRFARSGPRRNAQVTSVAPTGTISLIAGTTAGIEPMFAIAFTRAIVGRHLLEVNPCFDRLARDRGFYRDELIAEIAQRGGVRGYPRLPAEVRAAFPTAAEIAPQWHLRMQAAVQRHVEAAVSKTVNLPATATVDDVRAIYVAAWKAKVKGITVYRYGSREGQVLSSAAPKPLLAQADTEFSGGCAGRSCEF.

One can recognise an ATP-cone domain in the interval Ala-7–Arg-95. Substrate-binding positions include Ser-177, Gly-192 to Cys-193, Gly-221, Asn-375 to Glu-379, and Pro-520 to Ile-524. Cysteines 193 and 388 form a disulfide. The Proton acceptor role is filled by Asn-375. The active-site Cysteine radical intermediate is the Cys-377. Glu-379 serves as the catalytic Proton acceptor.

The protein belongs to the ribonucleoside diphosphate reductase class-2 family. It depends on adenosylcob(III)alamin as a cofactor.

The enzyme catalyses a 2'-deoxyribonucleoside 5'-diphosphate + [thioredoxin]-disulfide + H2O = a ribonucleoside 5'-diphosphate + [thioredoxin]-dithiol. Provides the precursors necessary for DNA synthesis. Catalyzes the biosynthesis of deoxyribonucleotides from the corresponding ribonucleotides. This Mycobacterium tuberculosis (strain CDC 1551 / Oshkosh) protein is Vitamin B12-dependent ribonucleoside-diphosphate reductase (nrdZ).